A 159-amino-acid chain; its full sequence is Testis-specific XK-related protein, Y-linked (159 aa).

A run of 3 helical transmembrane segments spans residues 1–21 (MFIFNSIADDIFPLISCVGAI), 45–65 (IYLMIWHSLVIISPVVTLAFF), and 72–92 (GSLHFLLIIYFVLLLTPWLEF).

It belongs to the XK family. Testis specific.

It is found in the membrane. In Homo sapiens (Human), this protein is Testis-specific XK-related protein, Y-linked (XKRY).